The chain runs to 110 residues: Small ribosomal subunit protein bS16 (110 aa).

Residues 81 to 104 (VRPAEVLGKQKQEKERSAKKKDAA) are compositionally biased toward basic and acidic residues. Positions 81–110 (VRPAEVLGKQKQEKERSAKKKDAAASETSE) are disordered.

This sequence belongs to the bacterial ribosomal protein bS16 family.

The chain is Small ribosomal subunit protein bS16 from Prochlorococcus marinus (strain NATL2A).